A 3118-amino-acid polypeptide reads, in one-letter code: Laminin subunit alpha-2 (3118 aa).

The first 19 residues, 1 to 19 (MPAATAGILLLLLLGTLEG), serve as a signal peptide directing secretion. One can recognise a Laminin N-terminal domain in the interval 31–282 (QQRGLFPAVL…SVKDISVGGM (252 aa)). N51 and N85 each carry an N-linked (GlcNAc...) asparagine glycan. 6 disulfides stabilise this stretch: C283-C292, C285-C303, C305-C314, C317-C337, C340-C349, and C342-C374. Laminin EGF-like domains are found at residues 283-339 (CICY…ECEA), 340-409 (CNCH…PCQP), 410-464 (CHCD…DCQP), and 465-513 (CNCS…GCEE). An N-linked (GlcNAc...) asparagine glycan is attached at N299. N-linked (GlcNAc...) asparagine glycans are attached at residues N359 and N376. Cystine bridges form between C377–C386, C389–C407, C410–C422, C412–C438, C440–C449, C452–C462, C465–C478, C467–C482, C484–C493, and C496–C511. N466 carries an N-linked (GlcNAc...) asparagine glycan. Residues 514–523 (CFCSGVSNRC) form the Laminin EGF-like 5; first part domain. One can recognise a Laminin IV type A 1 domain in the interval 527 to 719 (YWTYGNIQDM…DRRIATDVEV (193 aa)). The Laminin EGF-like 5; second part domain occupies 720 to 752 (CQCPPGYSGSSCETCWPRHRRVNGTIFGGICEP). Residue N742 is glycosylated (N-linked (GlcNAc...) asparagine). Cystine bridges form between C753–C762, C755–C769, C772–C781, C784–C800, C803–C818, C805–C828, C831–C840, C843–C858, C861–C875, C863–C882, C885–C894, C897–C911, C914–C926, C916–C933, C935–C944, C947–C960, C963–C975, C965–C981, C983–C992, C995–C1007, C1010–C1019, C1012–C1026, C1028–C1037, C1040–C1053, C1056–C1068, C1058–C1075, C1077–C1086, C1089–C1099, C1102–C1114, C1104–C1130, C1132–C1141, and C1144–C1159. 8 consecutive Laminin EGF-like domains span residues 753–802 (CQCF…DCQP), 803–860 (CACP…SCQP), 861–913 (CQCN…NCQP), 914–962 (CRCN…GCLP), 963–1009 (CNCN…GCIA), 1010–1055 (CDCS…GCKV), 1056–1101 (CNCS…LCTL), and 1102–1161 (CDCF…GCSS). A glycan (N-linked (GlcNAc...) asparagine) is linked at N919. An N-linked (GlcNAc...) asparagine glycan is attached at N1031. An N-linked (GlcNAc...) asparagine glycan is attached at N1057. Residues 1162 to 1171 (CYCFGVTSQC) form the Laminin EGF-like 14; first part domain. One can recognise a Laminin IV type A 2 domain in the interval 1172-1375 (SEAKGLIRTW…GSPPAHLIER (204 aa)). One can recognise a Laminin EGF-like 14; second part domain in the interval 1376–1415 (CDCPPGYSGLSCETCAPGFYRLRSEPGGRTPGPTLGTCVP). 13 disulfide bridges follow: C1378-C1387, C1416-C1425, C1418-C1432, C1435-C1444, C1447-C1462, C1465-C1480, C1467-C1490, C1493-C1502, C1505-C1520, C1523-C1535, C1525-C1542, C1544-C1553, and C1556-C1567. Laminin EGF-like domains are found at residues 1416 to 1464 (CQCN…DCQP), 1465 to 1522 (CACP…SCQE), and 1523 to 1569 (CECD…ECVF). Residues 1570–2140 (CGDECTGLLL…NQARKQANSI (571 aa)) form a domain II and I region. N1593, N1610, N1696, N1806, N1897, N1912, N1916, N2013, N2024, N2041, N2122, and N2236 each carry an N-linked (GlcNAc...) asparagine glycan. A coiled-coil region spans residues 1662–1863 (QDAERTNSRA…DIKTKLPPMS (202 aa)). The stretch at 1923–2146 (AYSNIKDYID…ANSIKVSVSS (224 aa)) forms a coiled coil. Laminin G-like domains are found at residues 2141–2324 (KVSV…CKGC), 2336–2517 (TIQF…TKGC), 2522–2706 (VYTV…IGRC), 2759–2930 (SKQF…VGTC), and 2929–3115 (TCFA…PVSC). C2298 and C2324 are disulfide-bonded. Residues N2356, N2431, and N2474 are each glycosylated (N-linked (GlcNAc...) asparagine). C2491 and C2517 form a disulfide bridge. Residues N2547, N2554, and N2644 are each glycosylated (N-linked (GlcNAc...) asparagine). Residues C2679 and C2706 are joined by a disulfide bond. A glycan (N-linked (GlcNAc...) asparagine) is linked at N2889. Intrachain disulfides connect C2905/C2930 and C3083/C3115.

Laminin is a complex glycoprotein, consisting of three different polypeptide chains (alpha, beta, gamma), which are bound to each other by disulfide bonds into a cross-shaped molecule comprising one long and three short arms with globules at each end. Alpha-2 is a subunit of laminin-2 (laminin-211 or merosin), laminin-4 (laminin-221 or S-merosin) and laminin-12 (laminin-213). Interacts with FBLN1, FBLN2 and NID2.

It localises to the secreted. Its subcellular location is the extracellular space. It is found in the extracellular matrix. The protein localises to the basement membrane. Its function is as follows. Binding to cells via a high affinity receptor, laminin is thought to mediate the attachment, migration and organization of cells into tissues during embryonic development by interacting with other extracellular matrix components. The chain is Laminin subunit alpha-2 (Lama2) from Mus musculus (Mouse).